The chain runs to 209 residues: Ribonuclease HII (209 aa).

An RNase H type-2 domain is found at S5–L202. A divalent metal cation contacts are provided by D11, E12, and D108.

The protein belongs to the RNase HII family. Mn(2+) is required as a cofactor. Requires Mg(2+) as cofactor.

The protein localises to the cytoplasm. It catalyses the reaction Endonucleolytic cleavage to 5'-phosphomonoester.. In terms of biological role, endonuclease that specifically degrades the RNA of RNA-DNA hybrids. This chain is Ribonuclease HII (rnhB), found in Helicobacter pylori (strain J99 / ATCC 700824) (Campylobacter pylori J99).